The primary structure comprises 1061 residues: Ribonuclease 3 (1061 aa).

2 disordered regions span residues methionine 1–glutamine 20 and proline 149–glutamate 244. Basic and acidic residues predominate over residues lysine 156–serine 173. RNase III domains follow at residues leucine 586–glycine 759 and phenylalanine 811–glycine 935. Mg(2+) is bound by residues glutamate 851, aspartate 921, and glutamate 924. Positions aspartate 962 to lysine 1037 constitute a DRBM domain.

Belongs to the ribonuclease III family. Mg(2+) serves as cofactor. Requires Mn(2+) as cofactor.

The protein localises to the nucleus. The enzyme catalyses Endonucleolytic cleavage to 5'-phosphomonoester.. Its function is as follows. Executes the initial step of microRNA (miRNA) processing in the nucleus, that is the cleavage of pri-miRNA to release pre-miRNA. Involved in pre-rRNA processing. Cleaves double-strand RNA and does not cleave single-strand RNA. Involved in fertility. Required for the function or synthesis of the let-7 miRNA. In Caenorhabditis briggsae, this protein is Ribonuclease 3.